A 931-amino-acid chain; its full sequence is Neuropilin-2 (931 aa).

The segment at residues methionine 1–valine 20 is a signal peptide (or 22). The Extracellular portion of the chain corresponds to arginine 21 to proline 864. 3 cysteine pairs are disulfide-bonded: cysteine 28-cysteine 55, cysteine 83-cysteine 105, and cysteine 149-cysteine 175. CUB domains follow at residues cysteine 28–phenylalanine 142 and cysteine 149–valine 267. 2 N-linked (GlcNAc...) asparagine glycosylation sites follow: asparagine 152 and asparagine 157. Ca(2+) is bound by residues glutamate 197, aspartate 211, and aspartate 252. Cysteine 208 and cysteine 230 form a disulfide bridge. Cystine bridges form between cysteine 277–cysteine 427 and cysteine 434–cysteine 592. 2 consecutive F5/8 type C domains span residues cysteine 277–cysteine 427 and cysteine 434–cysteine 592. The span at threonine 298–arginine 310 shows a compositional bias: polar residues. Residues threonine 298–glycine 317 form a disordered region. The tract at residues valine 601 to glutamate 622 is disordered. Asparagine 629 carries N-linked (GlcNAc...) asparagine glycosylation. The MAM domain maps to serine 642–glutamate 802. Asparagine 839 carries N-linked (GlcNAc...) asparagine glycosylation. A helical membrane pass occupies residues isoleucine 865–tyrosine 889. Residues cysteine 890 to alanine 931 are Cytoplasmic-facing.

The protein belongs to the neuropilin family. As to quaternary structure, heterodimer with NRP1. Binds PLXNB1. In terms of assembly, (Microbial infection) Interacts with human cytomegalovirus proteins gL, UL128, UL130 and UL131A.

It localises to the membrane. The protein resides in the secreted. Functionally, high affinity receptor for semaphorins 3C, 3F, VEGF-165 and VEGF-145 isoforms of VEGF, and the PLGF-2 isoform of PGF. In terms of biological role, (Microbial infection) Acts as a receptor for human cytomegalovirus pentamer-dependent entry in epithelial and endothelial cells. This Homo sapiens (Human) protein is Neuropilin-2 (NRP2).